Here is a 79-residue protein sequence, read N- to C-terminus: Protein RALF-like 35 (79 aa).

Positions 1–29 (MAAHKMSLTSLFFVSIVIVLSLFSGFGEG) are cleaved as a signal peptide. Cystine bridges form between C45-C52 and C66-C72. Residue N68 is glycosylated (N-linked (GlcNAc...) asparagine).

It belongs to the plant rapid alkalinization factor (RALF) family.

The protein localises to the secreted. In terms of biological role, cell signaling peptide that may regulate plant stress, growth, and development. Mediates a rapid alkalinization of extracellular space by mediating a transient increase in the cytoplasmic Ca(2+) concentration leading to a calcium-dependent signaling events through a cell surface receptor and a concomitant activation of some intracellular mitogen-activated protein kinases. This is Protein RALF-like 35 from Arabidopsis thaliana (Mouse-ear cress).